The sequence spans 477 residues: Calcium uptake protein 1, mitochondrial (477 aa).

The transit peptide at 1 to 33 (MFRLNALSALAELAVGSRWYHGTSQPTQTKRRL) directs the protein to the mitochondrion. Residues 55-108 (AHAESPPSVNSKKTDAGDKGKSKDTREVSSHEGSAADTAAEPYPEEKKKKRSGF) are disordered. Positions 66–84 (KKTDAGDKGKSKDTREVSS) are enriched in basic and acidic residues. The tract at residues 101-112 (KKKKRSGFRDRK) is polybasic region. Phosphoserine is present on Ser124. Positions 128 to 131 (KIFR) are k/R-ring. The region spanning 220 to 255 (TPQRNFEIAFKMFDLNGDGEVDMEEFEQVQSIIRSQ) is the EF-hand 1 domain. Residues Asp233, Asn235, Asp237, Glu239, and Glu244 each contribute to the Ca(2+) site. Residues 261-265 (RHRDR) are k/R-ring. Residues 356–376 (KDGKGLTFQEVENFFTFLKNI) enclose the EF-hand 2; degenerate domain. In terms of domain architecture, EF-hand 3 spans 410–445 (LSDHVCDVVFALFDCDGNGELSNKEFVSIMKQRLMR). 5 residues coordinate Ca(2+): Asp423, Asp425, Asn427, Glu429, and Glu434. Arg457 carries the asymmetric dimethylarginine modification. Residues 457–467 (RLMQAMWKCAQ) are C-helix region.

It belongs to the MICU1 family. MICU1 subfamily. Heterodimer; disulfide-linked; heterodimerizes with MICU2 or MICU3. Homodimer; disulfide-linked. Component of the uniplex complex, composed of MCU, EMRE/SMDT1, MICU1 and MICU2 (or MICU3) in a 4:4:1:1 stoichiometry. The composition of calcium sensors within the uniplex complex can differ depending on tissues: a MICU1 homodimer can be present instead of the MICU1-MICU2 heterodimer in skeletal-muscle and kidney. MICU1 is recruited to the uniplex complex by EMRE/SMDT1, and it associates with MCU at low calcium levels, occluding the pore of the MCU channel. Associates with the MICOS complex. Interacts with SLC25A23. Interacts with CHCHD4/MIA40; which introduces the interchain disulfide bond with MICU2. Interacts (when methylated) with UCP2; leading to decrease the calcium sensitivity of MICU1. In terms of processing, phosphorylation at Ser-124 by AKT1 impairs its maturation and stability. Post-translationally, asymmetric dimethylation at Arg-457 by PRMT1 decreases the calcium sensitivity of MICU1 by promoting interaction with UCP2. Degraded by YME1L1 when not complexed as homodimer or heterodimer. Not degraded when complexed as homodimer or heterodimer; the presence of the interchain disulfide bond protecting MICU1 from degradation by YME1L1.

The protein localises to the mitochondrion intermembrane space. Its subcellular location is the mitochondrion inner membrane. In terms of biological role, calcium sensor of the mitochondrial calcium uniporter (MCU) channel, which senses calcium level via its EF-hand domains. MICU1 and MICU2 (or MICU3) form a disulfide-linked heterodimer that stimulates and inhibits MCU activity, depending on the concentration of calcium. At low calcium levels, MICU1 occludes the pore of the MCU channel, preventing mitochondrial calcium uptake. At higher calcium levels, calcium-binding to MICU1 and MICU2 (or MICU3) induces a conformational change that weakens MCU-MICU1 interactions and moves the MICU1-MICU2 heterodimer away from the pore, allowing calcium permeation through the MCU channel. Also required to protect against manganese toxicity by preventing manganese uptake by MCU: mechanistically, manganese-binding to its EF-hand domains does not induce any conformational change, maintaining MCU pore occlusion. Acts as a regulator of mitochondrial cristae structure independently of its ability to regulate the mitochondrial calcium uniporter channel. Regulates glucose-dependent insulin secretion in pancreatic beta-cells by regulating mitochondrial calcium uptake. Induces T-helper 1-mediated autoreactivity, which is accompanied by the release of IFNG. This is Calcium uptake protein 1, mitochondrial (Micu1) from Rattus norvegicus (Rat).